A 397-amino-acid polypeptide reads, in one-letter code: Argininosuccinate synthase (397 aa).

8 to 16 (AYSGGLDTS) contacts ATP. The L-citrulline site is built by Tyr86 and Ser91. Gly116 contributes to the ATP binding site. L-aspartate contacts are provided by Thr118, Asn122, and Asp123. Residue Asn122 coordinates L-citrulline. L-citrulline-binding residues include Arg126, Ser175, Ser184, Glu260, and Tyr272.

The protein belongs to the argininosuccinate synthase family. Type 1 subfamily. Homotetramer.

It is found in the cytoplasm. The enzyme catalyses L-citrulline + L-aspartate + ATP = 2-(N(omega)-L-arginino)succinate + AMP + diphosphate + H(+). It participates in amino-acid biosynthesis; L-arginine biosynthesis; L-arginine from L-ornithine and carbamoyl phosphate: step 2/3. The polypeptide is Argininosuccinate synthase (Clostridium botulinum (strain Langeland / NCTC 10281 / Type F)).